Reading from the N-terminus, the 402-residue chain is Phosphoglycerate kinase (402 aa).

Residues Asp24 to Asn26, Arg40, His63 to Arg66, Arg122, and Arg155 each bind substrate. ATP is bound by residues Lys206, Gly297, Glu328, and Gly357–Ser360.

It belongs to the phosphoglycerate kinase family. Monomer.

The protein resides in the cytoplasm. The catalysed reaction is (2R)-3-phosphoglycerate + ATP = (2R)-3-phospho-glyceroyl phosphate + ADP. The protein operates within carbohydrate degradation; glycolysis; pyruvate from D-glyceraldehyde 3-phosphate: step 2/5. This is Phosphoglycerate kinase from Synechococcus sp. (strain ATCC 27144 / PCC 6301 / SAUG 1402/1) (Anacystis nidulans).